Reading from the N-terminus, the 256-residue chain is Ubiquinone/menaquinone biosynthesis C-methyltransferase UbiE (256 aa).

S-adenosyl-L-methionine contacts are provided by residues T79, D100, and 128 to 129 (DA).

Belongs to the class I-like SAM-binding methyltransferase superfamily. MenG/UbiE family.

The enzyme catalyses a 2-demethylmenaquinol + S-adenosyl-L-methionine = a menaquinol + S-adenosyl-L-homocysteine + H(+). It catalyses the reaction a 2-methoxy-6-(all-trans-polyprenyl)benzene-1,4-diol + S-adenosyl-L-methionine = a 5-methoxy-2-methyl-3-(all-trans-polyprenyl)benzene-1,4-diol + S-adenosyl-L-homocysteine + H(+). The protein operates within quinol/quinone metabolism; menaquinone biosynthesis; menaquinol from 1,4-dihydroxy-2-naphthoate: step 2/2. It participates in cofactor biosynthesis; ubiquinone biosynthesis. Methyltransferase required for the conversion of demethylmenaquinol (DMKH2) to menaquinol (MKH2) and the conversion of 2-polyprenyl-6-methoxy-1,4-benzoquinol (DDMQH2) to 2-polyprenyl-3-methyl-6-methoxy-1,4-benzoquinol (DMQH2). The chain is Ubiquinone/menaquinone biosynthesis C-methyltransferase UbiE from Stutzerimonas stutzeri (strain A1501) (Pseudomonas stutzeri).